Here is a 78-residue protein sequence, read N- to C-terminus: Large ribosomal subunit protein eL20 (78 aa).

Belongs to the eukaryotic ribosomal protein eL20 family. As to quaternary structure, part of the 50S ribosomal subunit. Binds 23S rRNA.

The protein is Large ribosomal subunit protein eL20 of Thermococcus sibiricus (strain DSM 12597 / MM 739).